We begin with the raw amino-acid sequence, 84 residues long: Putative membrane protein insertion efficiency factor (84 aa).

The interval 64-84 (GGSGYDPPPPRHQPRKWKCEE) is disordered. Residues 75-84 (HQPRKWKCEE) show a composition bias toward basic residues.

Belongs to the UPF0161 family.

The protein localises to the cell inner membrane. In terms of biological role, could be involved in insertion of integral membrane proteins into the membrane. The sequence is that of Putative membrane protein insertion efficiency factor from Caulobacter vibrioides (strain ATCC 19089 / CIP 103742 / CB 15) (Caulobacter crescentus).